We begin with the raw amino-acid sequence, 278 residues long: Lipoyl-[GcvH]:protein N-lipoyltransferase (278 aa).

In terms of domain architecture, BPL/LPL catalytic spans 44–250; the sequence is RMAPSTVRGW…SLRHYAGDLV (207 aa). The active-site Acyl-thioester intermediate is the Cys149.

It belongs to the octanoyltransferase LipL family.

The enzyme catalyses N(6)-[(R)-lipoyl]-L-lysyl-[glycine-cleavage complex H protein] + L-lysyl-[lipoyl-carrier protein] = L-lysyl-[glycine-cleavage complex H protein] + N(6)-[(R)-lipoyl]-L-lysyl-[lipoyl-carrier protein]. It functions in the pathway protein modification; protein lipoylation via exogenous pathway. Catalyzes the amidotransfer (transamidation) of the lipoyl moiety from lipoyl-GcvH to the lipoyl domain of the E2 subunit of lipoate-dependent enzymes. Takes part in a pathway for scavenging of lipoic acid derived from eukaryotic host cells. Cannot use lipoyl-tripeptide (DK(L)A), lipoamide (LD), or free lipoate as substrate. The chain is Lipoyl-[GcvH]:protein N-lipoyltransferase from Listeria monocytogenes serovar 1/2a (strain ATCC BAA-679 / EGD-e).